The sequence spans 337 residues: RNA 3'-terminal phosphate cyclase (337 aa).

ATP contacts are provided by residues Gln-101 and 282 to 285 (HMSD). Residue His-306 is the Tele-AMP-histidine intermediate of the active site.

Belongs to the RNA 3'-terminal cyclase family. Type 1 subfamily.

It localises to the cytoplasm. It catalyses the reaction a 3'-end 3'-phospho-ribonucleotide-RNA + ATP = a 3'-end 2',3'-cyclophospho-ribonucleotide-RNA + AMP + diphosphate. Catalyzes the conversion of 3'-phosphate to a 2',3'-cyclic phosphodiester at the end of RNA. The mechanism of action of the enzyme occurs in 3 steps: (A) adenylation of the enzyme by ATP; (B) transfer of adenylate to an RNA-N3'P to produce RNA-N3'PP5'A; (C) and attack of the adjacent 2'-hydroxyl on the 3'-phosphorus in the diester linkage to produce the cyclic end product. The biological role of this enzyme is unknown but it is likely to function in some aspects of cellular RNA processing. This is RNA 3'-terminal phosphate cyclase from Saccharolobus islandicus (strain M.16.4 / Kamchatka #3) (Sulfolobus islandicus).